A 1086-amino-acid polypeptide reads, in one-letter code: NAD(P) transhydrogenase, mitochondrial (1086 aa).

A mitochondrion-targeting transit peptide spans 1-43 (MANLLKTVVTGCSCPFLSNLGSCKVLPGKKNFLRAFHTHRILW). The Mitochondrial matrix segment spans residues 44–474 (CKAPVKPGIP…TITPFRKTMT (431 aa)). Lysine 70 carries the post-translational modification N6-acetyllysine. N6-succinyllysine is present on lysine 117. Residue 182-184 (RVT) coordinates NAD(+). The residue at position 224 (lysine 224) is an N6-succinyllysine. NAD(+)-binding positions include valine 237, 257–259 (DTR), and glycine 287. Lysine 294 is modified (N6-succinyllysine). 2 residues coordinate NAD(+): glutamate 300 and leucine 319. N6-succinyllysine is present on lysine 331. Lysine 397 carries the N6-acetyllysine modification. The next 4 helical transmembrane spans lie at 475 to 493 (SASV…GIAA), 501 to 521 (MVTT…GVTP), 527 to 546 (LMSV…LVLM), and 558 to 578 (GLAA…FLVT). Over 579 to 595 (QRMLDMFKRPTDPPEYN) the chain is Mitochondrial matrix. The next 5 helical transmembrane spans lie at 596–616 (YLYL…LYSG), 622–642 (IMYL…STQG), 646–666 (LGNA…LGGL), 672–691 (LLAQ…LTIA), and 702–722 (LVAA…IAEY). The Cytoplasmic segment spans residues 723–739 (IIEYPHFATDAAANLTK). The next 5 helical transmembrane spans lie at 740–760 (IVAY…LVAY), 778–797 (HLLN…PFMM), 801–819 (FTTG…AVMG), 833–853 (VVIT…GFLL), and 857–879 (LLTI…MCVA). The Mitochondrial matrix portion of the chain corresponds to 880–1086 (MNRSLANVIL…QAKVRESYQK (207 aa)). NADP(+) contacts are provided by residues tyrosine 933, 965-970 (VAGRMP), 1007-1011 (GANDT), 1026-1027 (GM), 1042-1049 (KRSLGVGY), and 1068-1069 (DA). Lysine 1079 bears the N6-succinyllysine mark.

In the N-terminal section; belongs to the AlaDH/PNT family. This sequence in the C-terminal section; belongs to the PNT beta subunit family. In terms of assembly, homodimer.

The protein localises to the mitochondrion inner membrane. It catalyses the reaction NAD(+) + NADPH + H(+)(in) = NADH + NADP(+) + H(+)(out). The transhydrogenation between NADH and NADP is coupled to respiration and ATP hydrolysis and functions as a proton pump across the membrane. May play a role in reactive oxygen species (ROS) detoxification in the adrenal gland. In Ovis aries (Sheep), this protein is NAD(P) transhydrogenase, mitochondrial (NNT).